Reading from the N-terminus, the 148-residue chain is Nucleoside diphosphate kinase 1 (148 aa).

Residues lysine 9, phenylalanine 57, arginine 85, threonine 91, arginine 102, and asparagine 112 each contribute to the ATP site. Histidine 115 (pros-phosphohistidine intermediate) is an active-site residue.

It belongs to the NDK family. Requires Mg(2+) as cofactor. The N-terminus is blocked.

The catalysed reaction is a 2'-deoxyribonucleoside 5'-diphosphate + ATP = a 2'-deoxyribonucleoside 5'-triphosphate + ADP. It catalyses the reaction a ribonucleoside 5'-diphosphate + ATP = a ribonucleoside 5'-triphosphate + ADP. Major role in the synthesis of nucleoside triphosphates other than ATP. The ATP gamma phosphate is transferred to the NDP beta phosphate via a ping-pong mechanism, using a phosphorylated active-site intermediate. The chain is Nucleoside diphosphate kinase 1 (NDPK1) from Spinacia oleracea (Spinach).